We begin with the raw amino-acid sequence, 1234 residues long: ATP-dependent helicase/nuclease subunit A (1234 aa).

The UvrD-like helicase ATP-binding domain maps to 2–475 (TQFTTSQQAA…IILAENFRST (474 aa)). 23–30 (ASAGSGKT) contributes to the ATP binding site. Residues 507–806 (YGALDYGDAH…KLMTIHKSKG (300 aa)) enclose the UvrD-like helicase C-terminal domain.

Belongs to the helicase family. AddA subfamily. Heterodimer of AddA and AddB/RexB. Mg(2+) is required as a cofactor.

It catalyses the reaction Couples ATP hydrolysis with the unwinding of duplex DNA by translocating in the 3'-5' direction.. The enzyme catalyses ATP + H2O = ADP + phosphate + H(+). The heterodimer acts as both an ATP-dependent DNA helicase and an ATP-dependent, dual-direction single-stranded exonuclease. Recognizes the chi site generating a DNA molecule suitable for the initiation of homologous recombination. The AddA nuclease domain is required for chi fragment generation; this subunit has the helicase and 3' -&gt; 5' nuclease activities. The polypeptide is ATP-dependent helicase/nuclease subunit A (Lacticaseibacillus casei (strain BL23) (Lactobacillus casei)).